Reading from the N-terminus, the 214-residue chain is ATP-dependent Clp protease proteolytic subunit (214 aa).

Catalysis depends on S114, which acts as the Nucleophile. H139 is an active-site residue.

Belongs to the peptidase S14 family. As to quaternary structure, fourteen ClpP subunits assemble into 2 heptameric rings which stack back to back to give a disk-like structure with a central cavity, resembling the structure of eukaryotic proteasomes.

The protein resides in the cytoplasm. It carries out the reaction Hydrolysis of proteins to small peptides in the presence of ATP and magnesium. alpha-casein is the usual test substrate. In the absence of ATP, only oligopeptides shorter than five residues are hydrolyzed (such as succinyl-Leu-Tyr-|-NHMec, and Leu-Tyr-Leu-|-Tyr-Trp, in which cleavage of the -Tyr-|-Leu- and -Tyr-|-Trp bonds also occurs).. Functionally, cleaves peptides in various proteins in a process that requires ATP hydrolysis. Has a chymotrypsin-like activity. Plays a major role in the degradation of misfolded proteins. This is ATP-dependent Clp protease proteolytic subunit from Nitrosomonas europaea (strain ATCC 19718 / CIP 103999 / KCTC 2705 / NBRC 14298).